Consider the following 617-residue polypeptide: Dihydroxy-acid dehydratase (617 aa).

Position 81 (D81) interacts with Mg(2+). C122 serves as a coordination point for [2Fe-2S] cluster. D123 and K124 together coordinate Mg(2+). K124 is modified (N6-carboxylysine). Position 195 (C195) interacts with [2Fe-2S] cluster. E492 lines the Mg(2+) pocket. S518 (proton acceptor) is an active-site residue.

It belongs to the IlvD/Edd family. In terms of assembly, homodimer. The cofactor is [2Fe-2S] cluster. Mg(2+) serves as cofactor.

The enzyme catalyses (2R)-2,3-dihydroxy-3-methylbutanoate = 3-methyl-2-oxobutanoate + H2O. It carries out the reaction (2R,3R)-2,3-dihydroxy-3-methylpentanoate = (S)-3-methyl-2-oxopentanoate + H2O. It functions in the pathway amino-acid biosynthesis; L-isoleucine biosynthesis; L-isoleucine from 2-oxobutanoate: step 3/4. Its pathway is amino-acid biosynthesis; L-valine biosynthesis; L-valine from pyruvate: step 3/4. Functions in the biosynthesis of branched-chain amino acids. Catalyzes the dehydration of (2R,3R)-2,3-dihydroxy-3-methylpentanoate (2,3-dihydroxy-3-methylvalerate) into 2-oxo-3-methylpentanoate (2-oxo-3-methylvalerate) and of (2R)-2,3-dihydroxy-3-methylbutanoate (2,3-dihydroxyisovalerate) into 2-oxo-3-methylbutanoate (2-oxoisovalerate), the penultimate precursor to L-isoleucine and L-valine, respectively. The polypeptide is Dihydroxy-acid dehydratase (Xanthobacter autotrophicus (strain ATCC BAA-1158 / Py2)).